A 1385-amino-acid polypeptide reads, in one-letter code: PsbD mRNA maturation factor Nac2, chloroplastic (1385 aa).

A chloroplast-targeting transit peptide spans 1 to 45 (MGALPCPAHIEHHQGLSSFGTRRVLRQSVACGAHRSRRRSLWAGA). Positions 132 to 152 (GPHGAASATGAGSHSSSAGAP) are enriched in low complexity. 7 disordered regions span residues 132–157 (GPHG…PTPR), 263–282 (AVAA…RSSA), 304–360 (TSSR…AAGP), 387–502 (RQQP…GHGQ), 546–568 (NGAG…SGTS), 726–756 (HADS…VAAA), and 840–899 (ARRA…APSA). Over residues 271-281 (QPHEHQQERSS) the composition is skewed to basic and acidic residues. Low complexity predominate over residues 304 to 313 (TSSRRGGRSS). The span at 403 to 412 (NGSGKSGSGG) shows a compositional bias: gly residues. 4 stretches are compositionally biased toward low complexity: residues 448–464 (APAA…RPAA), 554–568 (ASAS…SGTS), 729–744 (SSSS…SSSG), and 854–893 (ASTT…AAAG). TPR repeat units follow at residues 851–884 (RRGA…DPAS), 951–984 (GAVM…CPAD), 985–1018 (VALY…DRTD), 1019–1052 (KQLF…HPLN), 1053–1086 (TKII…DPLS), 1091–1124 (VHNR…HPNS), 1125–1158 (AALL…AGAF), 1160–1193 (AAVM…KQLN), and 1205–1238 (AWRA…APAV). 2 disordered regions span residues 1237–1257 (AVRG…GRRP) and 1333–1385 (IQDP…ADDM). Acidic residues predominate over residues 1356–1365 (QDADYYEEPE). Basic and acidic residues predominate over residues 1374 to 1385 (AVRRPMPDADDM).

Part of 2 complexes of about 600 and less than 2000 kDa, both of which also contain non-polysomal RNA.

It is found in the plastid. The protein localises to the chloroplast stroma. Its function is as follows. Involved, directly or indirectly, in the processing of the chloroplast encoded psbD mRNA to its mature form, acting via the 5'-UTR of the psbD mRNA. The last 588 amino acids of the protein are sufficient to confer stability on the transcript in vivo. The sequence is that of PsbD mRNA maturation factor Nac2, chloroplastic (NAC2) from Chlamydomonas reinhardtii (Chlamydomonas smithii).